The following is an 83-amino-acid chain: MTLIAILTCAAALVLHTTAAEELEAESQLMEVGMPDTELEAVDEERLFECSVSCEIEKEGNKDCKKKKCKGGWKCKFNMCVKI.

The N-terminal stretch at 1 to 20 (MTLIAILTCAAALVLHTTAA) is a signal peptide. The propeptide occupies 21–46 (EELEAESQLMEVGMPDTELEAVDEER). 3 cysteine pairs are disulfide-bonded: C50/C64, C54/C75, and C69/C80.

It belongs to the neurotoxin 12 (Hwtx-2) family. 02 (Hwtx-2) subfamily. As to expression, expressed by the venom gland.

Its subcellular location is the secreted. Its function is as follows. Postsynaptic neurotoxin. This Cyriopagopus hainanus (Chinese bird spider) protein is U4-theraphotoxin-Hhn1x.